The sequence spans 385 residues: NifS/IcsS protein homolog (385 aa).

Pyridoxal 5'-phosphate-binding positions include 69–70 (GT), N149, Q178, and 199–201 (SSH). The residue at position 202 (K202) is an N6-(pyridoxal phosphate)lysine. A pyridoxal 5'-phosphate-binding site is contributed by T237. C325 functions as the Cysteine persulfide intermediate in the catalytic mechanism. Residue C325 coordinates [2Fe-2S] cluster.

This sequence belongs to the class-V pyridoxal-phosphate-dependent aminotransferase family. NifS/IscS subfamily. Pyridoxal 5'-phosphate is required as a cofactor.

The protein is NifS/IcsS protein homolog of Lactobacillus delbrueckii subsp. bulgaricus (strain ATCC 11842 / DSM 20081 / BCRC 10696 / JCM 1002 / NBRC 13953 / NCIMB 11778 / NCTC 12712 / WDCM 00102 / Lb 14).